The sequence spans 402 residues: mRNA-capping enzyme subunit alpha (402 aa).

Catalysis depends on Lys67, which acts as the N6-GMP-lysine intermediate. Residues 374 to 402 (SVTKRKLDETSNDDAPAIKKVAKESEKEI) form a disordered region.

The protein belongs to the eukaryotic GTase family. Heterodimer. The mRNA-capping enzyme is composed of two separate chains alpha and beta, respectively a mRNA guanylyltransferase and an mRNA 5'-triphosphate monophosphatase.

It localises to the nucleus. It catalyses the reaction a 5'-end diphospho-ribonucleoside in mRNA + GTP + H(+) = a 5'-end (5'-triphosphoguanosine)-ribonucleoside in mRNA + diphosphate. Second step of mRNA capping. Transfer of the GMP moiety of GTP to the 5'-end of RNA via an enzyme-GMP covalent reaction intermediate. The protein is mRNA-capping enzyme subunit alpha (ceg1) of Schizosaccharomyces pombe (strain 972 / ATCC 24843) (Fission yeast).